Reading from the N-terminus, the 1605-residue chain is Sister chromatid cohesion protein PDS5 homolog A (1605 aa).

HEAT repeat units follow at residues 50–89 (KSIQPFLDAVIKPEILNHQDKDVKLLVASCVSEITRITAP), 96–136 (NIMK…YRSC), 146–183 (DLVKEVFTTFLDVARDDHPEIVFSSMQNIMIVLLEESE), 184–221 (DVQEHLLLILLSKLGRNRSDVRDAARRLAMKVIEHCAP), 261–298 (QALSGVAPYLTGELLADKLETRLKVVGLVGELFSLPGR), 302–339 (EEFDSIFLEFLKRLTDRVVEVRMAILDHIKDCLLSDPL), 341–378 (AEASQIISALCDRLLDYDENIRKQVVAVICDVSVSALT), 380–416 (IPVDTMKLVAERLRDKAILVKTYTMERLTELFRVYCL), 552–591 (ANIWKILTNLLDPNTSITQASRIRDDMLKILSEKHSLYDF), 644–681 (SLFDGAEEELISFLKDDDEMMKEGTLKILAKAGGTIRE), 723–758 (KSLSVLYKRLVDMLEDKRYQPAVLQCLGCIAQIAMP), 821–860 (AGVDDLLGILKNILSFGEVSEDLESSSVDKAHLRLAAAKA), 961–1000 (LYPHHILPYLVHALAHHSCPDVEKCKDVKEYEMIYRQLYL), and 1050–1088 (HAICELGLSIINHLTQKEPDLQGEITPVSLPPTLYKPSE). Disordered stretches follow at residues 1155–1182 (LRAQGTKTRKGKKNKSVPAEDENGKNDV) and 1203–1262 (ESSN…PKVQ). The span at 1211 to 1225 (SPSERAEICQRDQKG) shows a compositional bias: basic and acidic residues. Positions 1226-1233 (NKRNVGDA) match the Nuclear localization signal 1 motif. Residue Ser-1274 is modified to Phosphoserine. Positions 1279–1295 (NVSLDSHDENSDQEKML) are enriched in basic and acidic residues. 3 disordered regions span residues 1279 to 1307 (NVSLDSHDENSDQEKMLESISPRKRKKSL), 1324 to 1353 (ERSRSAGGGDSKLKSASGSMKKRKNVSGLA), and 1423 to 1605 (GKTA…RTAI). Ser-1299 is modified (phosphoserine). Composition is skewed to basic residues over residues 1425 to 1442 (TAKKSRTSKGNSKKKRSS) and 1464 to 1476 (KGKRTPKKNLKQL). The Nuclear localization signal 2 signature appears at 1426-1433 (AKKSRTSK). Basic and acidic residues-rich tracts occupy residues 1477–1495 (HPKDTPKSLSLEHEKVESR), 1514–1527 (GEEKSESEGKSLKE), and 1534–1574 (VVNK…NEME). A phosphoserine mark is found at Ser-1524, Ser-1562, and Ser-1584. A compositionally biased stretch (acidic residues) spans 1575-1585 (REAEENAETSD). Thr-1588 carries the phosphothreonine modification.

It belongs to the PDS5 family. Interacts with the cohesin complex. Interacts with DEK3.

It localises to the nucleus. In terms of biological role, cohesin cofactor dispensable during the meiotic division but playing an important role in DNA repair by homologous recombination (HR) probably by helping SMC5/SMC6 complex. Regulator of sister chromatid cohesion in mitosis which may stabilize cohesin complex association with chromatin. May couple sister chromatid cohesion during mitosis to DNA replication. Cohesion ensures that chromosome partitioning is accurate in both meiotic and mitotic cells and plays an important role in DNA repair. The chain is Sister chromatid cohesion protein PDS5 homolog A from Arabidopsis thaliana (Mouse-ear cress).